Here is a 491-residue protein sequence, read N- to C-terminus: Aspartyl/glutamyl-tRNA(Asn/Gln) amidotransferase subunit B (491 aa).

This sequence belongs to the GatB/GatE family. GatB subfamily. Heterotrimer of A, B and C subunits.

The enzyme catalyses L-glutamyl-tRNA(Gln) + L-glutamine + ATP + H2O = L-glutaminyl-tRNA(Gln) + L-glutamate + ADP + phosphate + H(+). The catalysed reaction is L-aspartyl-tRNA(Asn) + L-glutamine + ATP + H2O = L-asparaginyl-tRNA(Asn) + L-glutamate + ADP + phosphate + 2 H(+). Allows the formation of correctly charged Asn-tRNA(Asn) or Gln-tRNA(Gln) through the transamidation of misacylated Asp-tRNA(Asn) or Glu-tRNA(Gln) in organisms which lack either or both of asparaginyl-tRNA or glutaminyl-tRNA synthetases. The reaction takes place in the presence of glutamine and ATP through an activated phospho-Asp-tRNA(Asn) or phospho-Glu-tRNA(Gln). The polypeptide is Aspartyl/glutamyl-tRNA(Asn/Gln) amidotransferase subunit B (Burkholderia lata (strain ATCC 17760 / DSM 23089 / LMG 22485 / NCIMB 9086 / R18194 / 383)).